The chain runs to 43 residues: Large ribosomal subunit protein uL5 (43 aa).

This sequence belongs to the universal ribosomal protein uL5 family. In terms of assembly, part of the 50S ribosomal subunit; part of the 5S rRNA/L5/L18/L25 subcomplex. Contacts the 5S rRNA and the P site tRNA. Forms a bridge to the 30S subunit in the 70S ribosome.

Functionally, this is one of the proteins that bind and probably mediate the attachment of the 5S RNA into the large ribosomal subunit, where it forms part of the central protuberance. In the 70S ribosome it contacts protein S13 of the 30S subunit (bridge B1b), connecting the 2 subunits; this bridge is implicated in subunit movement. Contacts the P site tRNA; the 5S rRNA and some of its associated proteins might help stabilize positioning of ribosome-bound tRNAs. The protein is Large ribosomal subunit protein uL5 (rplE) of Serratia marcescens.